A 79-amino-acid chain; its full sequence is Transcriptional regulator SplA (79 aa).

Functionally, regulator of the spore photoproduct lyase operon (splAB). This is Transcriptional regulator SplA (splA) from Bacillus subtilis (strain 168).